The sequence spans 55 residues: Large ribosomal subunit protein bL33 (55 aa).

It belongs to the bacterial ribosomal protein bL33 family.

The polypeptide is Large ribosomal subunit protein bL33 (Aliivibrio fischeri (strain ATCC 700601 / ES114) (Vibrio fischeri)).